The chain runs to 68 residues: U19-ctenitoxin-Pn1a (68 aa).

Q1 is modified (pyrrolidone carboxylic acid). 5 disulfides stabilise this stretch: C8–C19, C13–C28, C18–C51, C38–C59, and C53–C65.

Expressed by the venom gland.

The protein localises to the secreted. In terms of biological role, non-toxic to mice and insects. This Phoneutria nigriventer (Brazilian armed spider) protein is U19-ctenitoxin-Pn1a.